Reading from the N-terminus, the 121-residue chain is Large ribosomal subunit protein bL20 (121 aa).

The protein belongs to the bacterial ribosomal protein bL20 family.

In terms of biological role, binds directly to 23S ribosomal RNA and is necessary for the in vitro assembly process of the 50S ribosomal subunit. It is not involved in the protein synthesizing functions of that subunit. The sequence is that of Large ribosomal subunit protein bL20 from Methylorubrum populi (strain ATCC BAA-705 / NCIMB 13946 / BJ001) (Methylobacterium populi).